Reading from the N-terminus, the 153-residue chain is 6,7-dimethyl-8-ribityllumazine synthase (153 aa).

Residues Phe-23, Ala-57–Glu-59, and Ala-81–Ile-83 contribute to the 5-amino-6-(D-ribitylamino)uracil site. Residue Ala-86–Thr-87 participates in (2S)-2-hydroxy-3-oxobutyl phosphate binding. His-89 serves as the catalytic Proton donor. Phe-113 is a binding site for 5-amino-6-(D-ribitylamino)uracil. Position 127 (Arg-127) interacts with (2S)-2-hydroxy-3-oxobutyl phosphate.

Belongs to the DMRL synthase family.

It carries out the reaction (2S)-2-hydroxy-3-oxobutyl phosphate + 5-amino-6-(D-ribitylamino)uracil = 6,7-dimethyl-8-(1-D-ribityl)lumazine + phosphate + 2 H2O + H(+). The protein operates within cofactor biosynthesis; riboflavin biosynthesis; riboflavin from 2-hydroxy-3-oxobutyl phosphate and 5-amino-6-(D-ribitylamino)uracil: step 1/2. Catalyzes the formation of 6,7-dimethyl-8-ribityllumazine by condensation of 5-amino-6-(D-ribitylamino)uracil with 3,4-dihydroxy-2-butanone 4-phosphate. This is the penultimate step in the biosynthesis of riboflavin. The sequence is that of 6,7-dimethyl-8-ribityllumazine synthase from Leptospira borgpetersenii serovar Hardjo-bovis (strain JB197).